The following is a 547-amino-acid chain: Glucose-6-phosphate isomerase (547 aa).

Glu351 acts as the Proton donor in catalysis. Active-site residues include His382 and Lys511.

The protein belongs to the GPI family.

It is found in the cytoplasm. It carries out the reaction alpha-D-glucose 6-phosphate = beta-D-fructose 6-phosphate. It participates in carbohydrate biosynthesis; gluconeogenesis. Its pathway is carbohydrate degradation; glycolysis; D-glyceraldehyde 3-phosphate and glycerone phosphate from D-glucose: step 2/4. Catalyzes the reversible isomerization of glucose-6-phosphate to fructose-6-phosphate. The sequence is that of Glucose-6-phosphate isomerase from Xanthobacter autotrophicus (strain ATCC BAA-1158 / Py2).